We begin with the raw amino-acid sequence, 66 residues long: Neurotoxin-like protein STR1 (66 aa).

Residues 2 to 65 (RDGYIVHDGT…VWGEDGFMCW (64 aa)) enclose the LCN-type CS-alpha/beta domain. 4 cysteine pairs are disulfide-bonded: Cys13/Cys64, Cys17/Cys40, Cys26/Cys45, and Cys30/Cys47.

Belongs to the long (4 C-C) scorpion toxin superfamily. Sodium channel inhibitor family. Beta subfamily. Expressed by the venom gland.

It is found in the secreted. This protein is not toxic. The chain is Neurotoxin-like protein STR1 from Androctonus australis (Sahara scorpion).